Consider the following 301-residue polypeptide: Putative phosphoenolpyruvate synthase regulatory protein (301 aa).

Over residues 1–24 (MSEPVAPDGAQPAPAGATPQPLQP) the composition is skewed to low complexity. Residues 1-27 (MSEPVAPDGAQPAPAGATPQPLQPIAG) form a disordered region. 181–188 (GVSRSGKT) provides a ligand contact to ADP.

Belongs to the pyruvate, phosphate/water dikinase regulatory protein family. PSRP subfamily.

It carries out the reaction [pyruvate, water dikinase] + ADP = [pyruvate, water dikinase]-phosphate + AMP + H(+). It catalyses the reaction [pyruvate, water dikinase]-phosphate + phosphate + H(+) = [pyruvate, water dikinase] + diphosphate. Its function is as follows. Bifunctional serine/threonine kinase and phosphorylase involved in the regulation of the phosphoenolpyruvate synthase (PEPS) by catalyzing its phosphorylation/dephosphorylation. The sequence is that of Putative phosphoenolpyruvate synthase regulatory protein from Cupriavidus pinatubonensis (strain JMP 134 / LMG 1197) (Cupriavidus necator (strain JMP 134)).